We begin with the raw amino-acid sequence, 296 residues long: Nucleotide-binding protein Rmet_0297 (296 aa).

8 to 15 (GISGSGKS) contributes to the ATP binding site. 57–60 (DIRS) contributes to the GTP binding site.

The protein belongs to the RapZ-like family.

In terms of biological role, displays ATPase and GTPase activities. This chain is Nucleotide-binding protein Rmet_0297, found in Cupriavidus metallidurans (strain ATCC 43123 / DSM 2839 / NBRC 102507 / CH34) (Ralstonia metallidurans).